The chain runs to 272 residues: HMP-PP phosphatase (272 aa).

The Nucleophile role is filled by aspartate 8. Mg(2+) is bound by residues aspartate 8, aspartate 10, and aspartate 212.

Belongs to the HAD-like hydrolase superfamily. Cof family. Requires Mg(2+) as cofactor.

It carries out the reaction 4-amino-2-methyl-5-(diphosphooxymethyl)pyrimidine + H2O = 4-amino-2-methyl-5-(phosphooxymethyl)pyrimidine + phosphate + H(+). Functionally, catalyzes the hydrolysis of 4-amino-2-methyl-5-hydroxymethylpyrimidine pyrophosphate (HMP-PP) to 4-amino-2-methyl-5-hydroxymethylpyrimidine phosphate (HMP-P). This chain is HMP-PP phosphatase, found in Salmonella typhi.